The following is a 1081-amino-acid chain: Probable sucrose-phosphate synthase 2 (1081 aa).

3 disordered regions span residues glutamate 116 to asparagine 152, glutamate 239 to glycine 267, and isoleucine 760 to proline 780. The span at glutamate 256–glycine 267 shows a compositional bias: acidic residues.

This sequence belongs to the glycosyltransferase 1 family. In terms of assembly, homodimer or homotetramer.

The catalysed reaction is beta-D-fructose 6-phosphate + UDP-alpha-D-glucose = sucrose 6(F)-phosphate + UDP + H(+). The protein operates within glycan biosynthesis; sucrose biosynthesis; sucrose from D-fructose 6-phosphate and UDP-alpha-D-glucose: step 1/2. Activity is regulated by phosphorylation and moderated by concentration of metabolites and light. Plays a role in photosynthetic sucrose synthesis by catalyzing the rate-limiting step of sucrose biosynthesis from UDP-glucose and fructose- 6-phosphate. Involved in the regulation of carbon partitioning in the leaves of plants. May regulate the synthesis of sucrose and therefore play a major role as a limiting factor in the export of photoassimilates out of the leaf. Plays a role for sucrose availability that is essential for plant growth and fiber elongation. The protein is Probable sucrose-phosphate synthase 2 (SPS2) of Craterostigma plantagineum (Blue gem).